Reading from the N-terminus, the 157-residue chain is Regulator of Ty1 transposition protein 102 (157 aa).

S77 is subject to Phosphoserine. Residues 95-157 form a disordered region; the sequence is SLMTSHTKGD…TKESKDVKMN (63 aa). Positions 96–116 are enriched in polar residues; it reads LMTSHTKGDTSKATGAPSANQ. Phosphoserine is present on S122. Over residues 147–157 the composition is skewed to basic and acidic residues; the sequence is NTKESKDVKMN.

As to quaternary structure, interacts with STH1 and SWI3. Component of the two forms of the RSC complex composed of at least either RSC1 or RSC2, and ARP7, ARP9, LDB7, NPL6, RSC3, RSC30, RSC4, RSC58, RSC6, RSC8, RSC9, SFH1, STH1, HTL1 and probably RTT102. The complexes interact with histone and histone variant components of centromeric chromatin. Probable additional component of the SWI/SNF global transcription activator complex. The 1.14 MDa SWI/SNF complex is composed of 11 different subunits: one copy each of SWI1, SNF2/SWI2, SNF5, SNF12/SWP73, ARP7/SWP61, ARP9/SWP59; two copies each of SWI3, SNF6, SNF11, SWP82; and three copies of TAF14/SWP29.

It localises to the nucleus. In terms of biological role, probable component of the chromatin structure-remodeling complex (RSC) which is involved in transcription regulation and nucleosome positioning. RSC is responsible for the transfer of a histone octamer from a nucleosome core particle to naked DNA. The reaction requires ATP and involves an activated RSC-nucleosome intermediate. Remodeling reaction also involves DNA translocation, DNA twist and conformational change. As a reconfigurer of centromeric and flanking nucleosomes, RSC complex is required both for proper kinetochore function in chromosome segregation and, via a PKC1-dependent signaling pathway, for organization of the cellular cytoskeleton. Probable component of the SWI/SNF complex, an ATP-dependent chromatin-remodeling complex, is required for the positive and negative regulation of gene expression of a large number of genes. It changes chromatin structure by altering DNA-histone contacts within a nucleosome, leading eventually to a change in nucleosome position, thus facilitating or repressing binding of gene-specific transcription factors. The polypeptide is Regulator of Ty1 transposition protein 102 (RTT102) (Saccharomyces cerevisiae (strain ATCC 204508 / S288c) (Baker's yeast)).